Consider the following 782-residue polypeptide: MNTLQRLCVVCSKCNECAMELECLKYCDPAIVLVDSAPFKRNALTVVHLYRRLCPALAEQNARYQASLITLYLEMLLRCLYEDVLLVDEALGEFERHGDRQRYYRRVLRLDRCACHDTLEVTFTERIRLTVDVATLNEVERLLCKINCVYGVLEPTRGLELCRRLLSLMGRLCGISPVAAPEAYVENLTCLQCYEELAAVPNQGRSILKRLRGLLCDHLTVRKSLVQLETGIQTMEQDIVETVGSRPRLSSLLELLKGLSSSAAVSHAYISEAEDTLRRYNLFTDIPPRIYSLSDFTYWSKTSEVIVQRVNVTVQQLNMYHSLCRTLRNELGQYLYGDRVEDLFTLSEAQLGEDERLYVGSIYAAPERIVDLMTSLSLQSFENNPVFNKLHENNEIYSKIRSLLEEIRRPLDGAGTRGAAAATAAGARGAAEGTGGAAAAGGAAAAAGEAAGGPFQCGDPAARAHDVVREVHVRKKAYLQKVSELGYNRVMQCIKGQEKLIKKLVNVNLLGTVCFEVLAKVINGFIRRRAYLERVDGVVDVDRLLQYDDHLYVVNNLVHRRLPAESLPALGQEFYRFVNGPVFQHHADRYPLPYNIDMAYACDNAGMLPHLKEDLVRLAEGTVAPSEWMVAPYRRFFDLGAALDLNELQKGFWAHVREIVFSVALYNEAFGKELRLCRADEPVDEERERLVVTYNVDGPLFLYAGGGVWKSKDLYLLLYQHLNGAAAPPPPAAPSPPPAEPATTAGASRKRPAVESPGVLLDLVRDADRESSLVPDCLLYDP.

The C3H1-type zinc finger occupies cysteine 190 to histidine 218. Tyrosine 666–glutamate 673 contacts ATP. Residues alanine 727 to glutamate 740 are compositionally biased toward pro residues. Positions alanine 727 to valine 754 are disordered.

This sequence belongs to the herpesviridae TRM1 protein family. As to quaternary structure, associates with TRM2 and TRM3 to form the tripartite terminase complex. Interacts with portal protein.

The protein resides in the host nucleus. Its function is as follows. Component of the molecular motor that translocates viral genomic DNA in empty capsid during DNA packaging. Forms a tripartite terminase complex together with TRM2 and TRM3 in the host cytoplasm. Once the complex reaches the host nucleus, it interacts with the capsid portal vertex. This portal forms a ring in which genomic DNA is translocated into the capsid. TRM1 carries an endonuclease activity that plays an important role for the cleavage of concatemeric viral DNA into unit length genomes. The sequence is that of Tripartite terminase subunit 1 from Tupaiid herpesvirus (strain 2) (TuHV-2).